The following is a 662-amino-acid chain: MQLDNDSEFAKKIFNPNRAFAKQARIKNMCEYKDLVHEANEDYEHFWGELAKQKLTWFKPFDKVLNSDNAPFFKWFENGKINVSYNCIDRHLKDKKNKVAIIFEGEMGDYNVITYRKLHSEVNKTANLLKNEFNVKKGDRVIIYMPMIVESVYMMLACTRIGAIHSIVFAGFSPEALRDRINDAQAKLVITADGTFRKGKPYMLKPALDKALENNACPSVEKALIVIRNAKEIDYVRGRDFVYNEMVNYQSDKCEPEMMDSEDPLFLLYTSGSTGKPKGVQHSSAGYLLWAQMTMEWVFDIRDNDNFWCTADIGWITGHTYVVYGPLACGATTLILEGTMSYPDYGRWWRMIEEYRVDKFYTSPTAIRMLHAKGENEPSKYNLESLKVLGTVGEPINPTAWKWFYEKIGNSKCSIVDTWWQTETGGHIISPLPGATPIRASCATLPLPGIHAEVLNEDGTKTKPGEQGFLCITKPWPSMVRNIWGDEKRYIDSYFSQIKLNGEYVYLSGDGAIVDENGYITIIGRTDDIVNVSGHRIGTAEVESAISKHEMVAECAVVGIPDTIKGEGLFAFVVLCDGAKCNLGESLELLKEMNHILSVEIGKIAKLDNVMYVPGLPKTRSGKIMRRLLKSIAKKESITQDLSTLEDVNVVKEIMSIVQMEE.

CoA-binding positions include 197–200 (RKGK) and Thr-317. Residues 393–395 (GEP), 417–422 (DTWWQT), Asp-510, and Arg-525 contribute to the ATP site. Ser-533 lines the CoA pocket. Arg-536 contacts ATP. Residues His-549 and Val-552 each coordinate Mg(2+). Residue Lys-623 is modified to N6-acetyllysine.

Belongs to the ATP-dependent AMP-binding enzyme family. Mg(2+) is required as a cofactor. In terms of processing, acetylated. Deacetylation by the SIR2-homolog deacetylase activates the enzyme.

It carries out the reaction acetate + ATP + CoA = acetyl-CoA + AMP + diphosphate. Its function is as follows. Catalyzes the conversion of acetate into acetyl-CoA (AcCoA), an essential intermediate at the junction of anabolic and catabolic pathways. AcsA undergoes a two-step reaction. In the first half reaction, AcsA combines acetate with ATP to form acetyl-adenylate (AcAMP) intermediate. In the second half reaction, it can then transfer the acetyl group from AcAMP to the sulfhydryl group of CoA, forming the product AcCoA. This Helicobacter pylori (strain G27) protein is Acetyl-coenzyme A synthetase.